Consider the following 245-residue polypeptide: Ubiquinone/menaquinone biosynthesis C-methyltransferase UbiE (245 aa).

S-adenosyl-L-methionine is bound by residues threonine 71, aspartate 92, and 118-119; that span reads DA.

The protein belongs to the class I-like SAM-binding methyltransferase superfamily. MenG/UbiE family.

The enzyme catalyses a 2-demethylmenaquinol + S-adenosyl-L-methionine = a menaquinol + S-adenosyl-L-homocysteine + H(+). It carries out the reaction a 2-methoxy-6-(all-trans-polyprenyl)benzene-1,4-diol + S-adenosyl-L-methionine = a 5-methoxy-2-methyl-3-(all-trans-polyprenyl)benzene-1,4-diol + S-adenosyl-L-homocysteine + H(+). It functions in the pathway quinol/quinone metabolism; menaquinone biosynthesis; menaquinol from 1,4-dihydroxy-2-naphthoate: step 2/2. The protein operates within cofactor biosynthesis; ubiquinone biosynthesis. In terms of biological role, methyltransferase required for the conversion of demethylmenaquinol (DMKH2) to menaquinol (MKH2) and the conversion of 2-polyprenyl-6-methoxy-1,4-benzoquinol (DDMQH2) to 2-polyprenyl-3-methyl-6-methoxy-1,4-benzoquinol (DMQH2). The sequence is that of Ubiquinone/menaquinone biosynthesis C-methyltransferase UbiE from Neisseria meningitidis serogroup C (strain 053442).